The following is a 535-amino-acid chain: INSYN2B protein (535 aa).

Disordered regions lie at residues 23–85 (LVKQ…SFPR), 215–346 (EARE…RSSS), and 360–387 (KLPSQSDTPELQTGVGSEQLPASIPRQE). Over residues 46 to 59 (KNPTGVTEVNTQTP) the composition is skewed to polar residues. Low complexity predominate over residues 219-232 (SALSPESSAEESNS). Polar residues-rich tracts occupy residues 258 to 269 (CSNTNSSASNMP), 307 to 319 (RTHSSPEPGSRSQ), and 361 to 375 (LPSQSDTPELQTGVG). A coiled-coil region spans residues 411–448 (DLQGRLQSVEESLHSNQEKIKVLLNVIQDLEKAHALTE). Positions 493–528 (LEEAEPTEEAPSPPKSPAEAPVPEKQDLRRKSKKVK) are disordered.

It belongs to the INSYN2 family.

The protein is INSYN2B protein (Insyn2b) of Mus musculus (Mouse).